Reading from the N-terminus, the 416-residue chain is cAMP-dependent protein kinase regulatory subunit (416 aa).

A dimerization and phosphorylation region spans residues 2 to 183 (VSSLPKESQA…RLEKSIRNNF (182 aa)). Residues S3, S4, S9, S68, S70, S74, S77, S79, S81, S83, and S84 each carry the phosphoserine modification. Positions 8–45 (ESQAELQLFQNEINAANPSDFLQFSANYFNKRLEQQRA) are dimerization/docking domain (D/D). The tract at residues 65-138 (PEESFSRPQS…TSTPPLPMHF (74 aa)) is disordered. The span at 70-84 (SRPQSAQSQSRSRSS) shows a compositional bias: low complexity. The residue at position 129 (T129) is a Phosphothreonine. At S130 the chain carries Phosphoserine. Phosphothreonine is present on residues T131 and T144. Residues 142 to 146 (RRTSV) carry the Inhibitor sequence (IS) motif. The residue at position 145 (S145) is a Phosphoserine; by autocatalysis. The residue at position 147 (S147) is a Phosphoserine. Phosphothreonine occurs at positions 150 and 160. 3',5'-cyclic AMP is bound by residues 184 to 301 (LFNK…KSMP), E249, R258, 302 to 416 (VLKS…PTRH), E368, and R377.

The protein belongs to the cAMP-dependent kinase regulatory chain family. The inactive holoenzyme of cAMP-dependent protein kinase is a tetramer, composed of 2 regulatory subunits (R, encoded by BCY1) and two catalytic subunits (C, encoded by the 3 partially redundant TPK1, TPK2, and TPK3 genes). Activation by cAMP causes dissociation of the holoenzyme, producing 2 active catalytic monomers C and a regulatory dimer R(2). Post-translationally, phosphorylated by YAK1 in response to glucose starvation. Phosphorylated by MCK1 at Thr-129 upon TOR complex 1 (TORC1) inhibition. Thr-129 phosphorylation activates BCY1 to inhibit PKA. TORC1 inhibits phosphorylation of RxxS/T sites but has no effect on Ser-145 phosphorylation. The phosphorylation sites can be clustered in several groups, all localized in the N-terminal part. The first cluster termed cluster I (CI) is located close to the N-terminus and includes Ser-3, Ser-4 and Ser-9. The second includes Ser-68, Ser-70, Ser-74, Ser-77, Ser-79, Ser-81, Ser-83, and Ser-84. This cluster of phosphorylation sites, termed cluster II (CII), is important for BCY1 cytoplasmic localization and function. The third cluster of phosphorylated residues consists of Thr-144, Ser-145, Ser-147, Thr-150, and Thr-160. This cluster falls within or near the so-called autoinhibitory domain where the catalytic subunit of PKA autophosphorylates the highly conserved Ser-145 to inhibit BCY1. A last cluster of phosphorylated residues included Thr-129, Ser-130, and Thr-131 and is termed cluster III (CIII). Sites in CIII (and to a lesser extent in CII) are hyperphosphorylated in response to rapamycin.

Its subcellular location is the cytoplasm. It localises to the nucleus. In terms of biological role, regulatory subunit of the cyclic AMP-dependent protein kinase (PKA), an effector of the Ras/cAMP pathway. Inhibits PKA activity in the absence of cAMP. cAMP activates PKA and promotes growth and proliferation in response to good nutrient conditions. Together with ZDS1, provides a negative feedback control on the cell wall integrity-signaling pathway by acting as a negative regulator of MAP kinase SLT2/MPK1. In Saccharomyces cerevisiae (strain ATCC 204508 / S288c) (Baker's yeast), this protein is cAMP-dependent protein kinase regulatory subunit (BCY1).